A 619-amino-acid polypeptide reads, in one-letter code: Chaperone protein HscA homolog (619 aa).

The protein belongs to the heat shock protein 70 family.

Its function is as follows. Chaperone involved in the maturation of iron-sulfur cluster-containing proteins. Has a low intrinsic ATPase activity which is markedly stimulated by HscB. The chain is Chaperone protein HscA homolog from Acinetobacter baumannii (strain ACICU).